A 39-amino-acid polypeptide reads, in one-letter code: AEQQNFLSDLTGSFSSPCNENPTVAMMXISYXXQXIWAS.

The catalysed reaction is D-fructose + NADP(+) = 5-dehydro-D-fructose + NADPH + H(+). In Erwinia citreus, this protein is Fructose 5-dehydrogenase [NADP(+)].